A 660-amino-acid chain; its full sequence is MNPDLQKERAGASFNPELLTNVLDGSPENTRRRREIENLILNDPDFQHENLNFLSRSQRYEVAVKKSAIMVQKMRKFGIADPAEIMWFKKLHLVNFVEPVGLNYSMFIPTLLNQGTTAQQEKWLHSSKGLEIIGTYAQTEMGHGTHLRGLETTATYDPETQEFILNSPTVTSIKWWPGGLGKTSNHAIVLAQLFTQGKCYGLHAFIVPIRELGTHKPLPGITVGDIGPKFGYDEMDNGYLKMDNYRIPRENMLMKHAQVKPDGTYVKPLNNKLTYGTMVFIRSFLVGESARSLSKACTIAVRYSAVRHQSEINPGEPEPQILDYQTQQYKLFPLLATAYAFQFVGAYMKETYLRINEDIGHGDLSELPELHALTAGLKAFTSWTTNTAIEACRMACGGHGYSHCSGLPNIYVTFTPTCTFEGENTVMMLQTARFLMKSYDQVHSGKLVCGMVSYLNDLPSQRIQPQQVAVWPTMVDINSPDSLTEAYKLRAARLVEIAAKNLQTEVIHRKSKEVAWNLTSIDLVRASEAHCHYVVVKLFTEKVLQIQEKSIQAVLRRLCLLYSLYGISQNAGDFLQGSIMTESQITQVNGRIKELLTAIRPDAVALVDAFDFQDVTLGSVLGRYDGNVYENLFEWAKKSPLNKTEVHESYKHLKSLQSKL.

S26 bears the Phosphoserine mark. Residue K65 is modified to N6-acetyllysine. N6-succinyllysine is present on residues K89 and K90. T139 and G178 together coordinate FAD. The residue at position 216 (K216) is an N6-acetyllysine. The residue at position 241 (K241) is an N6-succinyllysine. K255, K267, and K272 each carry N6-acetyllysine. Residue K349 is modified to N6-succinyllysine. E421 serves as the catalytic Proton acceptor. N6-acetyllysine; alternate is present on residues K437 and K446. 2 positions are modified to N6-succinyllysine; alternate: K437 and K446. At K500 the chain carries N6-acetyllysine. At K512 the chain carries N6-acetyllysine; alternate. The residue at position 512 (K512) is an N6-succinyllysine; alternate. K542 carries the post-translational modification N6-succinyllysine. N6-acetyllysine; alternate is present on K637. K637 bears the N6-succinyllysine; alternate mark. N6-succinyllysine is present on K643. S649 is subject to Phosphoserine. Residue K651 is modified to N6-acetyllysine. K654 carries the post-translational modification N6-succinyllysine. A Microbody targeting signal motif is present at residues 658 to 660 (SKL).

This sequence belongs to the acyl-CoA oxidase family. In terms of assembly, homodimer. Interacts with LONP2. FAD serves as cofactor.

The protein localises to the peroxisome. It catalyses the reaction a 2,3-saturated acyl-CoA + O2 = a (2E)-enoyl-CoA + H2O2. The enzyme catalyses hexadecanoyl-CoA + O2 = (2E)-hexadecenoyl-CoA + H2O2. The catalysed reaction is dodecanoyl-CoA + O2 = (2E)-dodecenoyl-CoA + H2O2. It carries out the reaction octanoyl-CoA + O2 = (2E)-octenoyl-CoA + H2O2. It catalyses the reaction decanoyl-CoA + O2 = (2E)-decenoyl-CoA + H2O2. The enzyme catalyses tetradecanoyl-CoA + O2 = (2E)-tetradecenoyl-CoA + H2O2. The catalysed reaction is hexadecanedioyl-CoA + O2 = (2E)-hexadecenedioyl-CoA + H2O2. It carries out the reaction tetracosanoyl-CoA + O2 = (2E)-tetracosenoyl-CoA + H2O2. It catalyses the reaction glutaryl-CoA + O2 = (2E)-glutaconyl-CoA + H2O2. The enzyme catalyses hexanoyl-CoA + O2 = (2E)-hexenoyl-CoA + H2O2. The catalysed reaction is octadecanoyl-CoA + O2 = (2E)-octadecenoyl-CoA + H2O2. It carries out the reaction (5Z,8Z,11Z,14Z,17Z)-eicosapentaenoyl-CoA + O2 = (2E,5Z,8Z,11Z,14Z,17Z)-icosahexaenoyl-CoA + H2O2. It catalyses the reaction (6Z,9Z,12Z,15Z,18Z,21Z)-tetracosahexaenoyl-CoA + O2 = (2E,6Z,9Z,12Z,15Z,18Z,21Z)-tetracosaheptaenoyl-CoA + H2O2. It functions in the pathway lipid metabolism; peroxisomal fatty acid beta-oxidation. Involved in the initial and rate-limiting step of peroxisomal beta-oxidation of straight-chain saturated and unsaturated very-long-chain fatty acids. Catalyzes the desaturation of fatty acyl-CoAs such as palmitoyl-CoA (hexadecanoyl-CoA) to 2-trans-enoyl-CoAs ((2E)-enoyl-CoAs) such as (2E)-hexadecenoyl-CoA, and donates electrons directly to molecular oxygen (O(2)), thereby producing hydrogen peroxide (H(2)O(2)). The sequence is that of Peroxisomal acyl-coenzyme A oxidase 1 from Bos taurus (Bovine).